A 373-amino-acid chain; its full sequence is Anhydro-N-acetylmuramic acid kinase (373 aa).

13–20 (GTSMDGID) contributes to the ATP binding site.

This sequence belongs to the anhydro-N-acetylmuramic acid kinase family.

It carries out the reaction 1,6-anhydro-N-acetyl-beta-muramate + ATP + H2O = N-acetyl-D-muramate 6-phosphate + ADP + H(+). The protein operates within amino-sugar metabolism; 1,6-anhydro-N-acetylmuramate degradation. Its pathway is cell wall biogenesis; peptidoglycan recycling. In terms of biological role, catalyzes the specific phosphorylation of 1,6-anhydro-N-acetylmuramic acid (anhMurNAc) with the simultaneous cleavage of the 1,6-anhydro ring, generating MurNAc-6-P. Is required for the utilization of anhMurNAc either imported from the medium or derived from its own cell wall murein, and thus plays a role in cell wall recycling. This Brucella suis (strain ATCC 23445 / NCTC 10510) protein is Anhydro-N-acetylmuramic acid kinase.